Here is a 661-residue protein sequence, read N- to C-terminus: Zinc finger protein 81 (661 aa).

One can recognise a KRAB domain in the interval Val-21 to Ser-92. Lys-266 is covalently cross-linked (Glycyl lysine isopeptide (Lys-Gly) (interchain with G-Cter in SUMO2)). 12 C2H2-type zinc fingers span residues Tyr-330 to His-352, Tyr-358 to His-380, Phe-386 to His-408, His-414 to His-436, Tyr-442 to His-464, Tyr-470 to His-492, Tyr-498 to His-520, Tyr-526 to His-548, Tyr-554 to His-576, Tyr-582 to His-604, Tyr-610 to His-632, and Tyr-638 to His-660.

Belongs to the krueppel C2H2-type zinc-finger protein family.

The protein resides in the nucleus. May be involved in transcriptional regulation. The protein is Zinc finger protein 81 (ZNF81) of Homo sapiens (Human).